Consider the following 146-residue polypeptide: Ribonuclease H (146 aa).

Residues 1 to 141 (MKKVQLITDG…CDELATRAAR (141 aa)) form the RNase H type-1 domain. Mg(2+)-binding residues include D9, E47, D69, and D133.

Belongs to the RNase H family. Monomer. Mg(2+) is required as a cofactor.

It localises to the cytoplasm. The enzyme catalyses Endonucleolytic cleavage to 5'-phosphomonoester.. Functionally, endonuclease that specifically degrades the RNA of RNA-DNA hybrids. The polypeptide is Ribonuclease H (Solibacter usitatus (strain Ellin6076)).